Consider the following 597-residue polypeptide: Elongation factor 4 (597 aa).

In terms of domain architecture, tr-type G spans 2–184; the sequence is KNIRNFSIIA…TMIAKIPPPV (183 aa). GTP contacts are provided by residues 14–19 and 131–134; these read DHGKST and NKID.

It belongs to the TRAFAC class translation factor GTPase superfamily. Classic translation factor GTPase family. LepA subfamily.

It localises to the cell inner membrane. It carries out the reaction GTP + H2O = GDP + phosphate + H(+). In terms of biological role, required for accurate and efficient protein synthesis under certain stress conditions. May act as a fidelity factor of the translation reaction, by catalyzing a one-codon backward translocation of tRNAs on improperly translocated ribosomes. Back-translocation proceeds from a post-translocation (POST) complex to a pre-translocation (PRE) complex, thus giving elongation factor G a second chance to translocate the tRNAs correctly. Binds to ribosomes in a GTP-dependent manner. The polypeptide is Elongation factor 4 (Methylobacillus flagellatus (strain ATCC 51484 / DSM 6875 / VKM B-1610 / KT)).